The chain runs to 483 residues: Sodium/pantothenate symporter (483 aa).

Topologically, residues 1 to 2 are periplasmic; the sequence is MQ. Residues 3 to 23 traverse the membrane as a helical segment; that stretch reads LEVILPLVAYLVVVFGISVYA. Topologically, residues 24-42 are cytoplasmic; sequence MRKRSTGTFLNEYFLGSRS. A helical transmembrane segment spans residues 43–63; that stretch reads MGGIVLAMTLTATYISASSFI. Residues 64–73 are Periplasmic-facing; that stretch reads GGPGAAYKYG. The helical transmembrane segment at 74 to 94 threads the bilayer; that stretch reads LGWVLLAMIQLPAVWLSLGIL. Topologically, residues 95 to 123 are cytoplasmic; sequence GKKFAILARRYNAVTLNDMLFARYQSRLL. Residues 124–144 traverse the membrane as a helical segment; it reads VWLASLSLLVAFVGAMTVQFI. The Periplasmic portion of the chain corresponds to 145-157; sequence GGARLLETAAGIP. The helical transmembrane segment at 158–178 threads the bilayer; it reads YETGLLIFGISIALYTAFGGF. The Cytoplasmic segment spans residues 179–189; that stretch reads RASVLNDTMQG. Residues 190 to 210 form a helical membrane-spanning segment; the sequence is LVMLIGTVVLLIGVVHAAGGL. The Periplasmic segment spans residues 211–232; the sequence is SNAVQTLQTIDPQLVTPQGADD. Residues 233-253 traverse the membrane as a helical segment; the sequence is ILSPAFMTSFWVLVCFGVIGL. Over 254-272 the chain is Cytoplasmic; the sequence is PHTAVRCISYKDSKAVHRG. The helical transmembrane segment at 273-293 threads the bilayer; sequence IIIGTIVVAILMFGMHLAGAL. Topologically, residues 294 to 305 are periplasmic; the sequence is GRAVIPDLTVPD. A helical membrane pass occupies residues 306–326; it reads LVIPTLMVKVLPPFAAGIFLA. Topologically, residues 327–368 are cytoplasmic; sequence APMAAIMSTINAQLLQSSATIIKDLYLNIRPDQMQNETRLKR. A helical transmembrane segment spans residues 369–389; sequence MSAVITLVLGALLLLAAWKPP. Over 390 to 391 the chain is Periplasmic; sequence EM. Residues 392-412 traverse the membrane as a helical segment; the sequence is IIWLNLLAFGGLEAVFLWPLV. The Cytoplasmic segment spans residues 413–423; it reads LGLYWERANAK. Residues 424–444 form a helical membrane-spanning segment; sequence GALSAMIVGGVLYAVLATLNI. A topological domain (periplasmic) is located at residue glutamine 445. The helical transmembrane segment at 446–466 threads the bilayer; the sequence is YLGFHPIVPSLLLSLLAFLVG. The Cytoplasmic portion of the chain corresponds to 467 to 483; the sequence is NRFGTSVPQATVLTTDK.

The protein belongs to the sodium:solute symporter (SSF) (TC 2.A.21) family.

Its subcellular location is the cell inner membrane. It carries out the reaction (R)-pantothenate(in) + Na(+)(in) = (R)-pantothenate(out) + Na(+)(out). With respect to regulation, pantothenate uptake is not reduced in osmotically shocked cells or by ATP depletion with arsenate, but is reduced greater than 90% by the dissipation of the membrane electrochemical gradient with 2,4-dinitrophenol. Its function is as follows. Catalyzes the sodium-dependent uptake of extracellular pantothenate. This is Sodium/pantothenate symporter from Escherichia coli (strain K12).